Reading from the N-terminus, the 214-residue chain is Probable GTP-binding protein EngB (214 aa).

In terms of domain architecture, EngB-type G spans 22–194 (NLPEIAFAGR…WARIDALLSP (173 aa)). Residues 30-37 (GRSNVGKS), 57-61 (GRTQL), 75-78 (DLPG), 142-145 (TKCD), and 173-175 (FSA) each bind GTP. 2 residues coordinate Mg(2+): S37 and T59.

This sequence belongs to the TRAFAC class TrmE-Era-EngA-EngB-Septin-like GTPase superfamily. EngB GTPase family. Mg(2+) serves as cofactor.

In terms of biological role, necessary for normal cell division and for the maintenance of normal septation. In Citrifermentans bemidjiense (strain ATCC BAA-1014 / DSM 16622 / JCM 12645 / Bem) (Geobacter bemidjiensis), this protein is Probable GTP-binding protein EngB.